We begin with the raw amino-acid sequence, 477 residues long: Glutamate--tRNA ligase (477 aa).

The 'HIGH' region motif lies at 8–18 (PSPTGTLHIGT). Residues 247–251 (KLSKR) carry the 'KMSKS' region motif. Position 250 (Lys-250) interacts with ATP.

Belongs to the class-I aminoacyl-tRNA synthetase family. Glutamate--tRNA ligase type 1 subfamily. As to quaternary structure, monomer.

Its subcellular location is the cytoplasm. It catalyses the reaction tRNA(Glu) + L-glutamate + ATP = L-glutamyl-tRNA(Glu) + AMP + diphosphate. In terms of biological role, catalyzes the attachment of glutamate to tRNA(Glu) in a two-step reaction: glutamate is first activated by ATP to form Glu-AMP and then transferred to the acceptor end of tRNA(Glu). The sequence is that of Glutamate--tRNA ligase from Parasynechococcus marenigrum (strain WH8102).